The primary structure comprises 87 residues: MAGKSSGDRRKPIRKGKDGKNAAPAKSVRVGVIDYKDVATLRKFISERGKIRALRITGVSVQEQRLIARAVKNAREMALLPYAGSGR.

Residues 1–20 (MAGKSSGDRRKPIRKGKDGK) are compositionally biased toward basic and acidic residues. The segment at 1–24 (MAGKSSGDRRKPIRKGKDGKNAAP) is disordered.

Belongs to the bacterial ribosomal protein bS18 family. Part of the 30S ribosomal subunit. Forms a tight heterodimer with protein bS6.

Its function is as follows. Binds as a heterodimer with protein bS6 to the central domain of the 16S rRNA, where it helps stabilize the platform of the 30S subunit. This chain is Small ribosomal subunit protein bS18, found in Leifsonia xyli subsp. xyli (strain CTCB07).